We begin with the raw amino-acid sequence, 529 residues long: Peptide chain release factor 3 (529 aa).

Residues 11 to 280 form the tr-type G domain; the sequence is AARRTFAIIS…GLVAWAPPPM (270 aa). GTP contacts are provided by residues 20–27, 88–92, and 142–145; these read SHPDAGKT, DTPGH, and NKVD.

It belongs to the TRAFAC class translation factor GTPase superfamily. Classic translation factor GTPase family. PrfC subfamily.

Its subcellular location is the cytoplasm. Increases the formation of ribosomal termination complexes and stimulates activities of RF-1 and RF-2. It binds guanine nucleotides and has strong preference for UGA stop codons. It may interact directly with the ribosome. The stimulation of RF-1 and RF-2 is significantly reduced by GTP and GDP, but not by GMP. The polypeptide is Peptide chain release factor 3 (Sodalis glossinidius (strain morsitans)).